The following is a 152-amino-acid chain: MVEVPGSVGTTASLSLRLGQMVLAFGSLLFMTIGVRFYQFTAFCYLVTIMSLAIPWNLTLAMVDIYCVILQQPFQKPRILLAISIGDWVVSVLALASASSAASVVDILRSNESSCPPTICNRYQFAATLAFLTWFLSLSSSLFNLWLLPSLI.

Residues 1 to 17 (MVEVPGSVGTTASLSLR) lie on the Cytoplasmic side of the membrane. Residues 18–38 (LGQMVLAFGSLLFMTIGVRFY) form a helical membrane-spanning segment. Topologically, residues 39 to 42 (QFTA) are extracellular. Residues 43–63 (FCYLVTIMSLAIPWNLTLAMV) traverse the membrane as a helical segment. Topologically, residues 64 to 78 (DIYCVILQQPFQKPR) are cytoplasmic. The helical transmembrane segment at 79–99 (ILLAISIGDWVVSVLALASAS) threads the bilayer. Topologically, residues 100–128 (SAASVVDILRSNESSCPPTICNRYQFAAT) are extracellular. Residue Asn-111 is glycosylated (N-linked (GlcNAc...) asparagine). Residues 129–149 (LAFLTWFLSLSSSLFNLWLLP) form a helical membrane-spanning segment. The Cytoplasmic segment spans residues 150–152 (SLI).

The protein belongs to the Casparian strip membrane proteins (CASP) family. As to quaternary structure, homodimer and heterodimers. Expressed in the floral organ abscission zone and flower buds.

It localises to the cell membrane. In Arabidopsis thaliana (Mouse-ear cress), this protein is CASP-like protein 5C3.